The following is a 374-amino-acid chain: Ribonuclease D (374 aa).

The 3'-5' exonuclease domain maps to 3-171 (YQLITTDDGL…MAIRLVEETT (169 aa)). An HRDC domain is found at 210-289 (KGRHLACLQK…AETQTMDAAE (80 aa)).

Belongs to the RNase D family. A divalent metal cation serves as cofactor.

It localises to the cytoplasm. The enzyme catalyses Exonucleolytic cleavage that removes extra residues from the 3'-terminus of tRNA to produce 5'-mononucleotides.. Its function is as follows. Exonuclease involved in the 3' processing of various precursor tRNAs. Initiates hydrolysis at the 3'-terminus of an RNA molecule and releases 5'-mononucleotides. In Musicola paradisiaca (strain Ech703) (Dickeya paradisiaca), this protein is Ribonuclease D.